The following is a 357-amino-acid chain: Histidine biosynthesis bifunctional protein HisB (357 aa).

The segment at 1 to 167 (MNDKILFIDR…IHKYLMQNSH (167 aa)) is histidinol-phosphatase. D9 serves as the catalytic Nucleophile. Mg(2+) is bound by residues D9 and D11. Residue D11 is the Proton donor of the active site. Zn(2+)-binding residues include C93, H95, C101, and C103. D130 contacts Mg(2+). Residues 168–357 (RVAHIQRITN…QIPSSKGILL (190 aa)) are imidazoleglycerol-phosphate dehydratase.

The protein in the N-terminal section; belongs to the histidinol-phosphatase family. In the C-terminal section; belongs to the imidazoleglycerol-phosphate dehydratase family. Mg(2+) serves as cofactor. Zn(2+) is required as a cofactor.

Its subcellular location is the cytoplasm. It catalyses the reaction D-erythro-1-(imidazol-4-yl)glycerol 3-phosphate = 3-(imidazol-4-yl)-2-oxopropyl phosphate + H2O. The enzyme catalyses L-histidinol phosphate + H2O = L-histidinol + phosphate. Its pathway is amino-acid biosynthesis; L-histidine biosynthesis; L-histidine from 5-phospho-alpha-D-ribose 1-diphosphate: step 6/9. It functions in the pathway amino-acid biosynthesis; L-histidine biosynthesis; L-histidine from 5-phospho-alpha-D-ribose 1-diphosphate: step 8/9. The sequence is that of Histidine biosynthesis bifunctional protein HisB from Blochmanniella floridana.